We begin with the raw amino-acid sequence, 502 residues long: ATP synthase subunit alpha, chloroplastic (502 aa).

170–177 lines the ATP pocket; it reads GDRQTGKT.

Belongs to the ATPase alpha/beta chains family. F-type ATPases have 2 components, CF(1) - the catalytic core - and CF(0) - the membrane proton channel. CF(1) has five subunits: alpha(3), beta(3), gamma(1), delta(1), epsilon(1). CF(0) has four main subunits: a, b, b' and c.

The protein resides in the plastid. It localises to the chloroplast thylakoid membrane. It catalyses the reaction ATP + H2O + 4 H(+)(in) = ADP + phosphate + 5 H(+)(out). Functionally, produces ATP from ADP in the presence of a proton gradient across the membrane. The alpha chain is a regulatory subunit. In Rhodomonas salina (Cryptomonas salina), this protein is ATP synthase subunit alpha, chloroplastic.